Reading from the N-terminus, the 348-residue chain is L-threonine 3-dehydrogenase (348 aa).

C42 contacts Zn(2+). Residues T44 and H47 each act as charge relay system in the active site. The Zn(2+) site is built by H67, E68, C97, C100, C103, and C111. NAD(+) is bound by residues L179, E199, R204, 266–268, and 291–292; these read LGL and IT.

The protein belongs to the zinc-containing alcohol dehydrogenase family. As to quaternary structure, homotetramer. Zn(2+) serves as cofactor.

The protein localises to the cytoplasm. The catalysed reaction is L-threonine + NAD(+) = (2S)-2-amino-3-oxobutanoate + NADH + H(+). Its pathway is amino-acid degradation; L-threonine degradation via oxydo-reductase pathway; glycine from L-threonine: step 1/2. Catalyzes the NAD(+)-dependent oxidation of L-threonine to 2-amino-3-ketobutyrate. To a lesser extent, also catalyzes the oxidation of L-serine, D-threonine, butan-2,3-diol, butan-1,2-diol, and propan-1,2-diol and cannot oxidize other L-amino acids. Cannot utilize NADP(H) instead of NAD(H). The chain is L-threonine 3-dehydrogenase from Pyrococcus furiosus (strain ATCC 43587 / DSM 3638 / JCM 8422 / Vc1).